The sequence spans 382 residues: Alanine racemase 1 (382 aa).

Lys-39 acts as the Proton acceptor; specific for D-alanine in catalysis. Lys-39 bears the N6-(pyridoxal phosphate)lysine mark. Arg-138 provides a ligand contact to substrate. The active-site Proton acceptor; specific for L-alanine is the Tyr-265. A substrate-binding site is contributed by Met-312.

This sequence belongs to the alanine racemase family. Requires pyridoxal 5'-phosphate as cofactor.

The enzyme catalyses L-alanine = D-alanine. Its pathway is amino-acid biosynthesis; D-alanine biosynthesis; D-alanine from L-alanine: step 1/1. Functionally, catalyzes the interconversion of L-alanine and D-alanine. May also act on other amino acids. The chain is Alanine racemase 1 (alr1) from Staphylococcus aureus (strain N315).